We begin with the raw amino-acid sequence, 406 residues long: Terminal uridylyltransferase 7 (406 aa).

Residues 1–15 (MNVAKREFIRGMMAH) constitute a mitochondrion transit peptide. Residues serine 54 and 64 to 65 (SD) contribute to the UTP site. Mg(2+)-binding residues include aspartate 65 and aspartate 67. UTP-binding positions include 138-142 (GVENS), lysine 164, lysine 168, and 181-183 (NSF).

It belongs to the DNA polymerase type-B-like family. As to quaternary structure, component of the mitochondrial RNA editing core complex-like (RECC-like), also known as the editosome-like complex; only a small proportion of MEAT1 associates with the complex. Interacts with RNA-editing ligase REL1. The cofactor is Mg(2+).

Its subcellular location is the mitochondrion matrix. The catalysed reaction is RNA(n) + UTP = RNA(n)-3'-uridine ribonucleotide + diphosphate. Its function is as follows. Terminal uridylyltransferase which, as part of the mitochondrial RNA editing core-like complex (RECC-like), is involved in the post-transcriptional editing of mitochondrial RNA, a process involving the addition and deletion of uridine (U) nucleotides in the pre-mRNA. Specifically, catalyzes the addition of U to single-stranded RNA with a preference for a 3'-terminal U and adds the number of Us specified by a guide RNA (gRNA) to precleaved double-stranded RNA editing substrates. Essential for insect and bloodstream developmental forms viability. This chain is Terminal uridylyltransferase 7, found in Trypanosoma brucei brucei.